The following is a 429-amino-acid chain: ATP-sensitive inward rectifier potassium channel 12 (429 aa).

The Cytoplasmic portion of the chain corresponds to 1–76 (MTAGRVNPYS…IADMFTTCVD (76 aa)). The helical transmembrane segment at 77–103 (IRWRYMLLLFSLAFLVSWLLFGLIFWL) threads the bilayer. A 1,2-diacyl-sn-glycero-3-phospho-(1D-myo-inositol-4,5-bisphosphate) is bound by residues arginine 78 and arginine 80. The Extracellular portion of the chain corresponds to 104 to 129 (IALIHGDLENPGGDDTFKPCVLQVNG). A disulfide bridge links cysteine 123 with cysteine 155. An intramembrane region (helical; Pore-forming) is located at residues 130 to 146 (FVAAFLFSIETQTTIGY). Threonine 143, isoleucine 144, glycine 145, and tyrosine 146 together coordinate K(+). The short motif at 143 to 148 (TIGYGF) is the Selectivity filter element. At 147-155 (GFRCVTEEC) the chain is on the extracellular side. The helical transmembrane segment at 156-183 (PLAVFMVVVQSIVGCIIDSFMIGAIMAK) threads the bilayer. Positions 183 and 188 each coordinate a 1,2-diacyl-sn-glycero-3-phospho-(1D-myo-inositol-4,5-bisphosphate). Topologically, residues 184–429 (MARPKKRAQT…QRSYRRESEI (246 aa)) are cytoplasmic. Positions 386-407 (RDEDEEDDDSRGLDDLSPDNRH) are disordered. The span at 395 to 407 (SRGLDDLSPDNRH) shows a compositional bias: basic and acidic residues.

It belongs to the inward rectifier-type potassium channel family. In terms of assembly, homotetramer.

Its subcellular location is the membrane. The protein localises to the cell membrane. It is found in the sarcolemma. It localises to the T-tubule. It catalyses the reaction K(+)(in) = K(+)(out). With respect to regulation, activated by phosphatidylinositol 4,5-bisphosphate (PtdIns(4,5)P2). PtdIns(4,5)P2 binding to the cytoplasmic side of the channel triggers a conformation change leading to channel opening. In terms of biological role, inward rectifying potassium channel that probably participates in controlling the resting membrane potential in electrically excitable cells. Probably participates in establishing action potential waveform and excitability of neuronal and muscle tissues. Inward rectifier potassium channels are characterized by a greater tendency to allow potassium to flow into the cell rather than out of it. Their voltage dependence is regulated by the concentration of extracellular potassium; as external potassium is raised, the voltage range of the channel opening shifts to more positive voltages. The inward rectification is mainly due to the blockage of outward current by internal magnesium. This is ATP-sensitive inward rectifier potassium channel 12 (KCNJ12) from Gallus gallus (Chicken).